A 296-amino-acid polypeptide reads, in one-letter code: Nucleotide-binding protein M6_Spy0559 (296 aa).

Residue 13–20 (GMSGAGKT) coordinates ATP. Position 63-66 (63-66 (DMRS)) interacts with GTP.

It belongs to the RapZ-like family.

Its function is as follows. Displays ATPase and GTPase activities. The protein is Nucleotide-binding protein M6_Spy0559 of Streptococcus pyogenes serotype M6 (strain ATCC BAA-946 / MGAS10394).